Reading from the N-terminus, the 414-residue chain is COUP transcription factor 2 (414 aa).

The interval 1–72 (MAMVVSTWRD…PGGPGSDKQQ (72 aa)) is disordered. Pro residues predominate over residues 27–37 (PPVPGPPPGAP). Residues 38-57 (HTPQTPGQGGPASTPAQTAA) are compositionally biased toward low complexity. Thr-51 is subject to Phosphothreonine. Residues 58–67 (GGQGGPGGPG) are compositionally biased toward gly residues. The nuclear receptor DNA-binding region spans 76-151 (HIECVVCGDK…VGMRREAVQR (76 aa)). NR C4-type zinc fingers lie at residues 79-99 (CVVC…CEGC) and 115-139 (CRAN…LKKC). An interaction with ZFPM2 region spans residues 117–414 (ANRNCPIDQH…SFNWPYMAIQ (298 aa)). One can recognise an NR LBD domain in the interval 177-403 (YLSGYISLLL…TLIRDMLLSG (227 aa)). Positions 337 to 414 (LQEKSQCALE…SFNWPYMAIQ (78 aa)) are important for dimerization.

Belongs to the nuclear hormone receptor family. NR2 subfamily. As to quaternary structure, interacts with SQSTM1. Binds DNA as a dimer; homodimer or heterodimer with NR2F6. Interacts with NCOA1, NCOA2, NCOA3 and PPARGC1A. Interacts with ZFPM2.

The protein resides in the nucleus. In terms of biological role, ligand-activated transcription factor. Activated by high concentrations of 9-cis-retinoic acid and all-trans-retinoic acid, but not by dexamethasone, cortisol or progesterone (in vitro). Regulation of the apolipoprotein A-I gene transcription. Binds to DNA site A. May be required to establish ovary identity during early gonad development. The protein is COUP transcription factor 2 (NR2F2) of Bos taurus (Bovine).